Here is a 194-residue protein sequence, read N- to C-terminus: ATP-dependent Clp protease proteolytic subunit 4 (194 aa).

Catalysis depends on serine 100, which acts as the Nucleophile. Residue histidine 125 is part of the active site.

Belongs to the peptidase S14 family. Fourteen ClpP subunits assemble into 2 heptameric rings which stack back to back to give a disk-like structure with a central cavity, resembling the structure of eukaryotic proteasomes.

Its subcellular location is the cytoplasm. The catalysed reaction is Hydrolysis of proteins to small peptides in the presence of ATP and magnesium. alpha-casein is the usual test substrate. In the absence of ATP, only oligopeptides shorter than five residues are hydrolyzed (such as succinyl-Leu-Tyr-|-NHMec, and Leu-Tyr-Leu-|-Tyr-Trp, in which cleavage of the -Tyr-|-Leu- and -Tyr-|-Trp bonds also occurs).. Its function is as follows. Cleaves peptides in various proteins in a process that requires ATP hydrolysis. Has a chymotrypsin-like activity. Plays a major role in the degradation of misfolded proteins. In Rhodococcus jostii (strain RHA1), this protein is ATP-dependent Clp protease proteolytic subunit 4.